The chain runs to 180 residues: Adenine phosphoribosyltransferase (180 aa).

This sequence belongs to the purine/pyrimidine phosphoribosyltransferase family. As to quaternary structure, homodimer.

It localises to the cytoplasm. It catalyses the reaction AMP + diphosphate = 5-phospho-alpha-D-ribose 1-diphosphate + adenine. The protein operates within purine metabolism; AMP biosynthesis via salvage pathway; AMP from adenine: step 1/1. Its function is as follows. Catalyzes a salvage reaction resulting in the formation of AMP, that is energically less costly than de novo synthesis. This Mycolicibacterium paratuberculosis (strain ATCC BAA-968 / K-10) (Mycobacterium paratuberculosis) protein is Adenine phosphoribosyltransferase.